Consider the following 82-residue polypeptide: uncharacterized protein (82 aa).

2 helical membrane-spanning segments follow: residues 29 to 49 and 55 to 75; these read LMNA…GIII and WSLP…LTFF.

The protein resides in the cell membrane. This is an uncharacterized protein from Escherichia coli (strain K12).